We begin with the raw amino-acid sequence, 119 residues long: MASETEPRPLGTFECQLCALSAPYSYVGQKPPDTQAVVLLEESYIMKDPFSSDKARFLVLGSRCSVCSRLVCVGPDCSLFYSKRVCLPCVQENMSAFPQEIQQDVEKRKSTSKKHSNRP.

Belongs to the CDPF1 family.

The protein is Cysteine-rich DPF motif domain-containing protein 1 (Cdpf1) of Mus musculus (Mouse).